Reading from the N-terminus, the 262-residue chain is MLRVSFEQLLEAGVHFGHLKRKWNPAMAPYIFMERKGIHIIDLHKTILKIDEASSAIKQIIRSGRKILFVATKKQAKQVVADKVSFVGMPYVTEHWAGGMLTNFPTIRKAIQKMTVIDRMAHDGTFDLLSKRERLQITRQRAKLEKNLGSIADLKRLPSALFVVDVMKERIAVSEAKRLDIPVFAIVDTNSNPNGIDFIIPANDDATSSIEVILNAICDAIIEGKEERMMDTSINNENKEKTVSVFRKRTKIEGRSKKDSLS.

This sequence belongs to the universal ribosomal protein uS2 family.

This is Small ribosomal subunit protein uS2 from Azobacteroides pseudotrichonymphae genomovar. CFP2.